The following is a 273-amino-acid chain: MSYLPTYSNDLPAGPQGQRRRNNGNENDARQGYGQQSVPMVIRRLFKTPKNLDLETASWEMFHLIFHPRKAYRSIYYQRQTKNQWARDDPSFFIFQIALISLSSIIWSIYNSGFNNDSDMGALSIIGHFFKSLVMMVILDFFIFGFIMATIFYLLLNRSHFKFKSSQNSVVEWAYCFDVHCNSFLIILLCLYFIQFLLLPIINLQNWISLLIGNSLYCFAIGHYFILTFYGYNQLPFLKNLNFILLPTLGLSIIYLISLFGIDLSKKLSFYNY.

The interval 1–33 is disordered; that stretch reads MSYLPTYSNDLPAGPQGQRRRNNGNENDARQGY. Ser2 carries the post-translational modification N-acetylserine. The Cytoplasmic segment spans residues 2–89; sequence SYLPTYSNDL…QTKNQWARDD (88 aa). Residues 90-110 form a helical membrane-spanning segment; the sequence is PSFFIFQIALISLSSIIWSIY. Over 111 to 134 the chain is Lumenal; the sequence is NSGFNNDSDMGALSIIGHFFKSLV. Residues 135–155 form a helical membrane-spanning segment; it reads MMVILDFFIFGFIMATIFYLL. Over 156 to 175 the chain is Cytoplasmic; it reads LNRSHFKFKSSQNSVVEWAY. A helical membrane pass occupies residues 176–196; it reads CFDVHCNSFLIILLCLYFIQF. Residues 197–216 lie on the Lumenal side of the membrane; that stretch reads LLLPIINLQNWISLLIGNSL. A helical membrane pass occupies residues 217-237; that stretch reads YCFAIGHYFILTFYGYNQLPF. At 238–242 the chain is on the cytoplasmic side; that stretch reads LKNLN. Residues 243–263 traverse the membrane as a helical segment; the sequence is FILLPTLGLSIIYLISLFGID. Residues 264-273 are Lumenal-facing; it reads LSKKLSFYNY.

This sequence belongs to the unc-50 family. Interacts with GEA1 and GEA2.

The protein resides in the golgi apparatus membrane. Its subcellular location is the endoplasmic reticulum membrane. The chain is Protein GMH1 (GMH1) from Saccharomyces cerevisiae (strain ATCC 204508 / S288c) (Baker's yeast).